The following is a 432-amino-acid chain: Putative D-alanyl-D-alanine carboxypeptidase (432 aa).

A helical; Signal-anchor transmembrane segment spans residues 7–25 (ATVLLTFSLSAFAVEYPVL).

It belongs to the peptidase S12 family. YfeW subfamily.

The protein resides in the cell inner membrane. It catalyses the reaction Preferential cleavage: (Ac)2-L-Lys-D-Ala-|-D-Ala. Also transpeptidation of peptidyl-alanyl moieties that are N-acyl substituents of D-alanine.. This Salmonella paratyphi A (strain ATCC 9150 / SARB42) protein is Putative D-alanyl-D-alanine carboxypeptidase.